The sequence spans 1378 residues: DNA-directed RNA polymerase subunit beta (1378 aa).

This sequence belongs to the RNA polymerase beta chain family. As to quaternary structure, the RNAP catalytic core consists of 2 alpha, 1 beta, 1 beta' and 1 omega subunit. When a sigma factor is associated with the core the holoenzyme is formed, which can initiate transcription.

The catalysed reaction is RNA(n) + a ribonucleoside 5'-triphosphate = RNA(n+1) + diphosphate. DNA-dependent RNA polymerase catalyzes the transcription of DNA into RNA using the four ribonucleoside triphosphates as substrates. This chain is DNA-directed RNA polymerase subunit beta, found in Campylobacter jejuni (strain RM1221).